The following is a 129-amino-acid chain: Small ribosomal subunit protein uS11c (129 aa).

This sequence belongs to the universal ribosomal protein uS11 family. In terms of assembly, part of the 30S ribosomal subunit.

The protein resides in the plastid. It localises to the chloroplast. This Rhodomonas salina (Cryptomonas salina) protein is Small ribosomal subunit protein uS11c.